Consider the following 119-residue polypeptide: Holo-[acyl-carrier-protein] synthase (119 aa).

Aspartate 8 and glutamate 58 together coordinate Mg(2+).

The protein belongs to the P-Pant transferase superfamily. AcpS family. It depends on Mg(2+) as a cofactor.

The protein resides in the cytoplasm. The catalysed reaction is apo-[ACP] + CoA = holo-[ACP] + adenosine 3',5'-bisphosphate + H(+). Functionally, transfers the 4'-phosphopantetheine moiety from coenzyme A to a Ser of acyl-carrier-protein. The protein is Holo-[acyl-carrier-protein] synthase of Streptococcus thermophilus (strain ATCC BAA-491 / LMD-9).